Reading from the N-terminus, the 300-residue chain is UPF0761 membrane protein PSHAa0171 (300 aa).

6 helical membrane passes run 47–67 (LLSLVPLIAVGVAIFSAFPGF), 100–120 (NANQMTAVGIGFLAAIALLLI), 143–163 (FAVYWMVLSLGPVFLGGSIAV), 181–201 (FSGFLLKLLPYGISMVGFIML), 215–235 (AIPGALFAAMLFELTKKGFAL), and 249–269 (AVATIPILFVWIYLSWIVVLL).

This sequence belongs to the UPF0761 family.

The protein resides in the cell inner membrane. The polypeptide is UPF0761 membrane protein PSHAa0171 (Pseudoalteromonas translucida (strain TAC 125)).